Reading from the N-terminus, the 314-residue chain is MAEDAQGRPAPTSPFFVTIPSKLLPQLPDIPSDRPVLIAGPTASGKSALAVRLVEDGGGVVVNADALQVYDCWRILSARPSAAEEAALPHRLYGHVGARQTYSAGHWLKEVAAVLAEGLRPVIVGGTGLYFSALTEGLAEIPHTPPEVRAEADARLAEAGLARMVAELDAETAARIDLQNPARVQRAWEVLRATGRGLARWQAETAPPLLPLSDATALVIRPDPTWLAQRIDSRFNLMMADGALEEVRAALPGWDPTLPSARAIGAPELVAHLRGEIPLDEAVAAAKLASRQYAKRQRTWFRNRMRLWHEIRLP.

ATP is bound at residue 40-47 (GPTASGKS). Residue 42–47 (TASGKS) coordinates substrate.

The protein belongs to the IPP transferase family. As to quaternary structure, monomer. Requires Mg(2+) as cofactor.

The enzyme catalyses adenosine(37) in tRNA + dimethylallyl diphosphate = N(6)-dimethylallyladenosine(37) in tRNA + diphosphate. In terms of biological role, catalyzes the transfer of a dimethylallyl group onto the adenine at position 37 in tRNAs that read codons beginning with uridine, leading to the formation of N6-(dimethylallyl)adenosine (i(6)A). The sequence is that of tRNA dimethylallyltransferase from Cereibacter sphaeroides (strain KD131 / KCTC 12085) (Rhodobacter sphaeroides).